We begin with the raw amino-acid sequence, 427 residues long: Zinc-finger homeodomain protein 7 (427 aa).

Disordered regions lie at residues 1-60 and 91-118; these read MEYK…SLMD and LHAA…QRHH. Positions 10 to 28 are enriched in acidic residues; sequence EEEEEEEEEEDDEEEDEEE. The span at 50–60 shows a compositional bias: low complexity; sequence SSASSPSSLMD. A ZF-HD dimerization-type; degenerate zinc finger spans residues 163-211; sequence YRECLKNHAARMGAHVLDGCGEFMSSPGDGAAALACAACGCHRSFHRRE. Disordered regions lie at residues 264-320 and 375-427; these read KRPP…SKKR and HLAK…QHDA. Composition is skewed to low complexity over residues 271-283 and 301-312; these read VSPA…LAES and HAAAVVAASASA. The segment at residues 318–381 is a DNA-binding region (homeobox); sequence KKRFRTKFTA…NNKHLAKTPP (64 aa). The span at 380–401 shows a compositional bias: pro residues; it reads PPSPTSQPPPPPLHHDPSPPPP. A compositionally biased stretch (basic residues) spans 402–416; that stretch reads PHHHHHHHHHHHPPQ. The segment covering 417-427 has biased composition (low complexity); sequence HHQQQQQQHDA.

In terms of assembly, homo- and heterodimer with other ZFHD proteins.

It localises to the nucleus. Its function is as follows. Putative transcription factor. The protein is Zinc-finger homeodomain protein 7 (ZHD7) of Oryza sativa subsp. japonica (Rice).